The primary structure comprises 157 residues: Nascent polypeptide-associated complex subunit alpha (157 aa).

The NAC-A/B domain occupies threonine 6 to leucine 71. Basic and acidic residues predominate over residues serine 81–glutamate 107. The disordered stretch occupies residues serine 81–glutamate 116. The region spanning leucine 118–lysine 157 is the UBA domain.

The protein belongs to the NAC-alpha family.

The protein localises to the cytoplasm. Its subcellular location is the nucleus. May be involved in mitochondrial protein import by enhancing productive ribosome interactions with the outer mitochondrial membrane and blocks the inappropriate interaction of ribosomes translating non-secretory nascent polypeptides with translocation sites in the membrane of the endoplasmic reticulum. EGD2 may also be involved in transcription regulation. In Encephalitozoon cuniculi (strain GB-M1) (Microsporidian parasite), this protein is Nascent polypeptide-associated complex subunit alpha (EGD2).